Consider the following 279-residue polypeptide: Proteasome subunit beta (279 aa).

Residues 1-51 (MTFDASGRLPEAFLTPGGSSFMDFLAGHAPDLLPGRRSLGTGDLSKDVPHG) constitute a propeptide, removed in mature form; by autocatalysis. Thr52 functions as the Nucleophile in the catalytic mechanism.

This sequence belongs to the peptidase T1B family. In terms of assembly, the 20S proteasome core is composed of 14 alpha and 14 beta subunits that assemble into four stacked heptameric rings, resulting in a barrel-shaped structure. The two inner rings, each composed of seven catalytic beta subunits, are sandwiched by two outer rings, each composed of seven alpha subunits. The catalytic chamber with the active sites is on the inside of the barrel. Has a gated structure, the ends of the cylinder being occluded by the N-termini of the alpha-subunits. Is capped by the proteasome-associated ATPase, ARC.

Its subcellular location is the cytoplasm. The enzyme catalyses Cleavage of peptide bonds with very broad specificity.. Its pathway is protein degradation; proteasomal Pup-dependent pathway. The formation of the proteasomal ATPase ARC-20S proteasome complex, likely via the docking of the C-termini of ARC into the intersubunit pockets in the alpha-rings, may trigger opening of the gate for substrate entry. Interconversion between the open-gate and close-gate conformations leads to a dynamic regulation of the 20S proteasome proteolysis activity. In terms of biological role, component of the proteasome core, a large protease complex with broad specificity involved in protein degradation. This is Proteasome subunit beta from Kribbella flavida (strain DSM 17836 / JCM 10339 / NBRC 14399).